We begin with the raw amino-acid sequence, 405 residues long: Saccharopepsin (405 aa).

Residues 1-22 (MFSLKALLPLALLLVSANQVAA) form the signal peptide. A propeptide spans 23–76 (KVHKAKIYKHELSDEMKEVTFEQHLAHLGQKYLTQFEKANPEVVFSREHPFFTE) (activation peptide). The region spanning 91–402 (YYTDITLGTP…DLGNNAVGLA (312 aa)) is the Peptidase A1 domain. The active site involves Asp109. Cysteines 122 and 127 form a disulfide. Asn144 carries an N-linked (GlcNAc...) asparagine glycan. Asp294 is an active-site residue. A disulfide bridge links Cys328 with Cys361. The N-linked (GlcNAc...) asparagine glycan is linked to Asn345.

The protein belongs to the peptidase A1 family.

It is found in the vacuole. The enzyme catalyses Hydrolysis of proteins with broad specificity for peptide bonds. Cleaves -Leu-Leu-|-Val-Tyr- bond in a synthetic substrate. Does not act on esters of Tyr or Arg.. Aspartyl protease implicated in the post-translational regulation of S.cerevisiae vacuolar proteinases. Acts on YSCB, on YSCY and on itself. The chain is Saccharopepsin (PEP4) from Saccharomyces cerevisiae (strain ATCC 204508 / S288c) (Baker's yeast).